A 314-amino-acid polypeptide reads, in one-letter code: Protein ATP1B4 (314 aa).

A compositionally biased stretch (polar residues) spans 1-17; sequence MATTAGEQANYLQSADS. A disordered region spans residues 1–37; that stretch reads MATTAGEQANYLQSADSMSDGRQHHPEEAGEKKQEEQ. The Cytoplasmic segment spans residues 1–69; the sequence is MATTAGEQAN…VLGRDKKSWA (69 aa). A compositionally biased stretch (basic and acidic residues) spans 19–37; sequence SDGRQHHPEEAGEKKQEEQ. Residues 70–90 form a helical membrane-spanning segment; the sequence is LILLFYFILYCFLAGLFALCI. Over 91–314 the chain is Extracellular; that stretch reads YGLLATISPY…GRVAFTLHIG (224 aa). The cysteines at positions 160 and 179 are disulfide-linked. An N-linked (GlcNAc...) asparagine glycan is attached at N188. 2 disulfides stabilise this stretch: C189/C205 and C228/C287. N264 is a glycosylation site (N-linked (GlcNAc...) asparagine).

Belongs to the X(+)/potassium ATPases subunit beta family. As to quaternary structure, composed of two subunits: alpha (catalytic) and beta (accessory). Post-translationally, glycosylated. Expressed in skeletal muscle, liver, lung, kidney, heart, brain and skin.

It localises to the membrane. Its function is as follows. This is the non-catalytic component of the active enzyme, which catalyzes the hydrolysis of ATP coupled with the exchange of Na(+) and K(+) ions across the plasma membrane. The polypeptide is Protein ATP1B4 (atp1b4) (Xenopus laevis (African clawed frog)).